A 197-amino-acid polypeptide reads, in one-letter code: Elongation factor Ts (197 aa).

The tract at residues 81 to 84 is involved in Mg(2+) ion dislocation from EF-Tu; that stretch reads TDFV.

The protein belongs to the EF-Ts family.

The protein resides in the cytoplasm. Associates with the EF-Tu.GDP complex and induces the exchange of GDP to GTP. It remains bound to the aminoacyl-tRNA.EF-Tu.GTP complex up to the GTP hydrolysis stage on the ribosome. The polypeptide is Elongation factor Ts (Sulfurihydrogenibium sp. (strain YO3AOP1)).